Reading from the N-terminus, the 233-residue chain is Cytidylate kinase (233 aa).

Position 15–23 (15–23 (GPSGAGKST)) interacts with ATP. Over residues 183–201 (RRDEQDSGREHAPLRRADD) the composition is skewed to basic and acidic residues. Positions 183–202 (RRDEQDSGREHAPLRRADDA) are disordered.

This sequence belongs to the cytidylate kinase family. Type 1 subfamily.

It is found in the cytoplasm. The catalysed reaction is CMP + ATP = CDP + ADP. It catalyses the reaction dCMP + ATP = dCDP + ADP. In Geobacter sulfurreducens (strain ATCC 51573 / DSM 12127 / PCA), this protein is Cytidylate kinase.